Here is a 259-residue protein sequence, read N- to C-terminus: Small ribosomal subunit protein eS4 (259 aa).

Residues 41–105 form the S4 RNA-binding domain; the sequence is LPLSVLLKER…TDQSFRILYD (65 aa). At Thr248 the chain carries Phosphothreonine. Residue Ser258 is modified to Phosphoserine.

It belongs to the eukaryotic ribosomal protein eS4 family.

In Tetrahymena thermophila, this protein is Small ribosomal subunit protein eS4.